Here is a 352-residue protein sequence, read N- to C-terminus: Histidinol-phosphate aminotransferase (352 aa).

At lysine 211 the chain carries N6-(pyridoxal phosphate)lysine.

It belongs to the class-II pyridoxal-phosphate-dependent aminotransferase family. Histidinol-phosphate aminotransferase subfamily. As to quaternary structure, homodimer. The cofactor is pyridoxal 5'-phosphate.

The enzyme catalyses L-histidinol phosphate + 2-oxoglutarate = 3-(imidazol-4-yl)-2-oxopropyl phosphate + L-glutamate. Its pathway is amino-acid biosynthesis; L-histidine biosynthesis; L-histidine from 5-phospho-alpha-D-ribose 1-diphosphate: step 7/9. This Haemophilus influenzae (strain PittEE) protein is Histidinol-phosphate aminotransferase.